Reading from the N-terminus, the 333-residue chain is Glycerol-3-phosphate dehydrogenase [NAD(P)+] (333 aa).

Residues W16, R36, and K109 each coordinate NADPH. Positions 109, 137, and 139 each coordinate sn-glycerol 3-phosphate. Position 141 (A141) interacts with NADPH. K192, D245, S255, R256, and N257 together coordinate sn-glycerol 3-phosphate. Residue K192 is the Proton acceptor of the active site. R256 is a binding site for NADPH. NADPH contacts are provided by V280 and E282.

It belongs to the NAD-dependent glycerol-3-phosphate dehydrogenase family.

It is found in the cytoplasm. The catalysed reaction is sn-glycerol 3-phosphate + NAD(+) = dihydroxyacetone phosphate + NADH + H(+). It catalyses the reaction sn-glycerol 3-phosphate + NADP(+) = dihydroxyacetone phosphate + NADPH + H(+). It participates in membrane lipid metabolism; glycerophospholipid metabolism. Functionally, catalyzes the reduction of the glycolytic intermediate dihydroxyacetone phosphate (DHAP) to sn-glycerol 3-phosphate (G3P), the key precursor for phospholipid synthesis. The sequence is that of Glycerol-3-phosphate dehydrogenase [NAD(P)+] from Parvibaculum lavamentivorans (strain DS-1 / DSM 13023 / NCIMB 13966).